The primary structure comprises 1687 residues: Protein TOPAZ1 (1687 aa).

Disordered stretches follow at residues 1–132, 596–632, and 938–969; these read MRRP…PGFD, LSRS…GNLT, and ASEI…GDFS. The segment covering 31–41 has biased composition (gly residues); sequence GAAGGCGPEAG. Basic and acidic residues predominate over residues 80–113; that stretch reads RRVEGRRGQVSPSDRRGLEAAKEAEFPLQTERHT. Polar residues-rich tracts occupy residues 598–622 and 948–963; these read RSGS…SLTG and ANTS…SENE.

The protein localises to the cytoplasm. Its subcellular location is the cytosol. Important for normal spermatogenesis and male fertility. Specifically required for progression to the post-meiotic stages of spermatocyte development. Seems to be necessary for normal expression levels of a number of testis-expressed gene transcripts, although its role in this process is unclear. This is Protein TOPAZ1 (TOPAZ1) from Macaca mulatta (Rhesus macaque).